Here is a 254-residue protein sequence, read N- to C-terminus: 7-cyano-7-deazaguanine synthase (254 aa).

Tyr-30–Leu-40 is a binding site for ATP. 4 residues coordinate Zn(2+): Cys-218, Cys-233, Cys-236, and Cys-239.

It belongs to the QueC family. Zn(2+) is required as a cofactor.

The enzyme catalyses 7-carboxy-7-deazaguanine + NH4(+) + ATP = 7-cyano-7-deazaguanine + ADP + phosphate + H2O + H(+). It participates in purine metabolism; 7-cyano-7-deazaguanine biosynthesis. Functionally, catalyzes the ATP-dependent conversion of 7-carboxy-7-deazaguanine (CDG) to 7-cyano-7-deazaguanine (preQ(0)). The protein is 7-cyano-7-deazaguanine synthase of Zymomonas mobilis subsp. mobilis (strain ATCC 31821 / ZM4 / CP4).